We begin with the raw amino-acid sequence, 796 residues long: Protein SEY1 homolog (796 aa).

Topologically, residues 1 to 701 (MESSNDFSNK…AGTSISSWRN (701 aa)) are cytoplasmic. In terms of domain architecture, GB1/RHD3-type G spans 46–280 (GFRFNVVTIL…VPSDGFFVYS (235 aa)). 56 to 63 (GSQSSGKS) is a GTP binding site. The stretch at 554–626 (SLVLLLKAAR…DALTLLKVLK (73 aa)) forms a coiled coil. Residues 702 to 722 (IPPIFWLVLLVLGWNELRSVF) traverse the membrane as a helical segment. Topologically, residues 723–725 (KVL) are lumenal. Residues 726-746 (LRFYVVIPLLIVFYFTFSYSA) traverse the membrane as a helical segment. Topologically, residues 747–796 (TKLLGPKADQYVKPVRDKVLSLFTALLAWFVRTLHMIASKSSSFKQRPAT) are cytoplasmic.

It belongs to the TRAFAC class dynamin-like GTPase superfamily. GB1/RHD3 GTPase family. RHD3 subfamily.

It localises to the endoplasmic reticulum membrane. In terms of biological role, probable GTP-binding protein that may be involved in cell development. The protein is Protein SEY1 homolog of Theileria parva (East coast fever infection agent).